The sequence spans 114 residues: Amphinase-1 (114 aa).

Residue histidine 15 is the Proton acceptor of the active site. 4 disulfide bridges follow: cysteine 26-cysteine 79, cysteine 41-cysteine 85, cysteine 59-cysteine 100, and cysteine 97-cysteine 114. Residue asparagine 27 is glycosylated (N-linked (GlcNAc...) asparagine). 42-46 is a binding site for substrate; sequence KPVNT. N-linked (GlcNAc...) asparagine glycosylation is found at asparagine 67 and asparagine 91. The active-site Proton donor is histidine 107.

Belongs to the pancreatic ribonuclease family. In terms of assembly, monomer. There are at least five different forms arising from glycan heterogeneity.

Its subcellular location is the secreted. Its function is as follows. Endonuclease, hydrolyzes highly polymerized RNA, poly(U) and poly(C), and the dinucleotides CpA and UpA. More active towards rCA than rUA or rUG. Has cytotoxic activity against cultured human submaxillary gland carcinoma cells. The polypeptide is Amphinase-1 (Lithobates pipiens (Northern leopard frog)).